Here is a 259-residue protein sequence, read N- to C-terminus: Protein FAM220A (259 aa).

Disordered stretches follow at residues 1–44 (MRDR…ADAP) and 131–154 (LGGGPRATDGHRGQCPKGEPRVSR). Residues 138–152 (TDGHRGQCPKGEPRV) are compositionally biased toward basic and acidic residues.

Interacts with transcriptional activator STAT3; the interaction occurs in both the nucleus and the cytoplasm, is enhanced by IL6 and promotes STAT3 dephosphorylation, leading to negative regulation of STAT3 transcriptional activator activity. Can interact with both unphosphorylated and phosphorylated STAT3 but interacts preferentially with phosphorylated STAT3 in the nucleus. Interacts with protein phosphatase PTPN2/TC45; this promotes interaction of PTPN2 with STAT3, leading to dephosphorylation of STAT3 by PTPN2.

It is found in the nucleus. The protein resides in the cytoplasm. It localises to the cytoplasmic vesicle. The protein localises to the secretory vesicle. Its subcellular location is the acrosome. Promotes dephosphorylation of transcriptional activator STAT3 by interacting with both STAT3 and protein phosphatase PTPN2. This promotes interaction of PTPN2 with STAT3 and mediates STAT3 dephosphorylation by PTPN2, leading to negative regulation of STAT3 transcriptional activator activity. May be required for spermiogenesis or sperm function. The chain is Protein FAM220A from Homo sapiens (Human).